Reading from the N-terminus, the 430-residue chain is uncharacterized protein (430 aa).

The next 2 helical transmembrane spans lie at 20–40 (YLCL…GIMP) and 405–425 (YIWW…LLVI).

The protein resides in the membrane. This is an uncharacterized protein from Schizosaccharomyces pombe (strain 972 / ATCC 24843) (Fission yeast).